Consider the following 308-residue polypeptide: B3 domain-containing protein REM23 (308 aa).

Positions 19–114 (FFKVLKRSDM…SFTVKIFNKD (96 aa)) form a DNA-binding region, TF-B3 1. A disordered region spans residues 117–198 (EMMQPPQSRA…TERTQNSKRT (82 aa)). Positions 121–133 (PPQSRASFASSSR) are enriched in polar residues. Residues 134-145 (VKTEQDVKREEE) show a composition bias toward basic and acidic residues. Positions 149 to 166 (SSDSRSRGPTTAAETNRG) are enriched in polar residues. Over residues 168-177 (SYKRKLNFGK) the composition is skewed to basic residues. Basic and acidic residues predominate over residues 178-198 (KKAEETQTYKRTERTQNSKRT). A DNA-binding region (TF-B3 2) is located at residues 216 to 308 (VAGFKIFISK…LELLLVVSKP (93 aa)).

It is found in the nucleus. The protein is B3 domain-containing protein REM23 (REM23) of Arabidopsis thaliana (Mouse-ear cress).